The sequence spans 190 residues: Potassium-transporting ATPase KdpC subunit (190 aa).

The helical transmembrane segment at 10–30 threads the bilayer; the sequence is LLVFLTILTGGVYPLATTVLG.

Belongs to the KdpC family. In terms of assembly, the system is composed of three essential subunits: KdpA, KdpB and KdpC.

Its subcellular location is the cell inner membrane. Functionally, part of the high-affinity ATP-driven potassium transport (or Kdp) system, which catalyzes the hydrolysis of ATP coupled with the electrogenic transport of potassium into the cytoplasm. This subunit acts as a catalytic chaperone that increases the ATP-binding affinity of the ATP-hydrolyzing subunit KdpB by the formation of a transient KdpB/KdpC/ATP ternary complex. The sequence is that of Potassium-transporting ATPase KdpC subunit from Cronobacter sakazakii (strain ATCC BAA-894) (Enterobacter sakazakii).